The following is a 372-amino-acid chain: Aminodeoxyfutalosine synthase (372 aa).

The Radical SAM core domain maps to 53 to 292 (HKTYFVHSIR…VARLYLDNFP (240 aa)). Residues cysteine 69, cysteine 73, and cysteine 76 each coordinate [4Fe-4S] cluster.

The protein belongs to the radical SAM superfamily. MqnE family. [4Fe-4S] cluster serves as cofactor.

It catalyses the reaction 3-[(1-carboxyvinyl)-oxy]benzoate + S-adenosyl-L-methionine + H2O = 6-amino-6-deoxyfutalosine + hydrogencarbonate + L-methionine + H(+). Its pathway is quinol/quinone metabolism; menaquinone biosynthesis. Functionally, radical SAM enzyme that catalyzes the addition of the adenosyl radical to the double bond of 3-[(1-carboxyvinyl)oxy]benzoate, leading to aminodeoxyfutalosine (AFL), a key intermediate in the formation of menaquinone (MK, vitamin K2) from chorismate. This Thermus thermophilus (strain ATCC 27634 / DSM 579 / HB8) protein is Aminodeoxyfutalosine synthase.